Here is a 407-residue protein sequence, read N- to C-terminus: Ribonuclease Z (407 aa).

The tract at residues 1–308 (MEITFLGTSS…QDFLHYAIPR (308 aa)) is ribonuclease Z. Residues H62, H64, D66, H67, H139, D210, and H268 each contribute to the Zn(2+) site. D66 serves as the catalytic Proton acceptor. The interval 309 to 407 (DGQICAEMPP…VDWSALNVLF (99 aa)) is unknown.

The protein belongs to the RNase Z family. In terms of assembly, homodimer. The cofactor is Zn(2+).

The enzyme catalyses Endonucleolytic cleavage of RNA, removing extra 3' nucleotides from tRNA precursor, generating 3' termini of tRNAs. A 3'-hydroxy group is left at the tRNA terminus and a 5'-phosphoryl group is left at the trailer molecule.. In terms of biological role, zinc phosphodiesterase, which displays some tRNA 3'-processing endonuclease activity. Probably involved in tRNA maturation, by removing a 3'-trailer from precursor tRNA. This Thermosynechococcus vestitus (strain NIES-2133 / IAM M-273 / BP-1) protein is Ribonuclease Z (rnz).